The sequence spans 272 residues: Soluble interferon gamma receptor OPG193 (272 aa).

The N-terminal stretch at 1-13 (MRYIIILAVLFIN) is a signal peptide. 3 N-linked (GlcNAc...) asparagine; by host glycosylation sites follow: Asn42, Asn150, and Asn267.

Belongs to the type II cytokine receptor family. Homodimer. Interacts with host IFNG.

Its subcellular location is the secreted. In terms of biological role, counteracts the antiviral effects of host IFN-gamma. Acts as a soluble IFN-gamma receptor and thus inhibits the interaction between host IFN-gamma and its receptor. In Homo sapiens (Human), this protein is Soluble interferon gamma receptor OPG193 (OPG193).